A 389-amino-acid polypeptide reads, in one-letter code: Succinate--CoA ligase [ADP-forming] subunit beta (389 aa).

An ATP-grasp domain is found at 9–236 (KELFAKHNVP…KDATDPLELK (228 aa)). ATP is bound by residues lysine 45, 52–54 (GRG), serine 94, and glutamate 99. Mg(2+)-binding residues include asparagine 191 and aspartate 205. Substrate is bound by residues asparagine 256 and 318-320 (GIT).

Belongs to the succinate/malate CoA ligase beta subunit family. In terms of assembly, heterotetramer of two alpha and two beta subunits. The cofactor is Mg(2+).

It carries out the reaction succinate + ATP + CoA = succinyl-CoA + ADP + phosphate. The catalysed reaction is GTP + succinate + CoA = succinyl-CoA + GDP + phosphate. Its pathway is carbohydrate metabolism; tricarboxylic acid cycle; succinate from succinyl-CoA (ligase route): step 1/1. Its function is as follows. Succinyl-CoA synthetase functions in the citric acid cycle (TCA), coupling the hydrolysis of succinyl-CoA to the synthesis of either ATP or GTP and thus represents the only step of substrate-level phosphorylation in the TCA. The beta subunit provides nucleotide specificity of the enzyme and binds the substrate succinate, while the binding sites for coenzyme A and phosphate are found in the alpha subunit. This Mycobacteroides abscessus (strain ATCC 19977 / DSM 44196 / CCUG 20993 / CIP 104536 / JCM 13569 / NCTC 13031 / TMC 1543 / L948) (Mycobacterium abscessus) protein is Succinate--CoA ligase [ADP-forming] subunit beta.